The chain runs to 294 residues: 1D-myo-inositol 2-acetamido-2-deoxy-alpha-D-glucopyranoside deacetylase (294 aa).

Positions 15, 18, and 150 each coordinate Zn(2+).

The protein belongs to the MshB deacetylase family. Zn(2+) serves as cofactor.

The enzyme catalyses 1D-myo-inositol 2-acetamido-2-deoxy-alpha-D-glucopyranoside + H2O = 1D-myo-inositol 2-amino-2-deoxy-alpha-D-glucopyranoside + acetate. Functionally, catalyzes the deacetylation of 1D-myo-inositol 2-acetamido-2-deoxy-alpha-D-glucopyranoside (GlcNAc-Ins) in the mycothiol biosynthesis pathway. The protein is 1D-myo-inositol 2-acetamido-2-deoxy-alpha-D-glucopyranoside deacetylase of Streptomyces avermitilis (strain ATCC 31267 / DSM 46492 / JCM 5070 / NBRC 14893 / NCIMB 12804 / NRRL 8165 / MA-4680).